A 164-amino-acid chain; its full sequence is HTH-type transcriptional regulator IscR (164 aa).

Residues 2 to 131 (RLTSKGRYAV…GSISLEELVK (130 aa)) enclose the HTH rrf2-type domain. Positions 28–51 (LADISERQGISLSYLEQLFSRLRK) form a DNA-binding region, H-T-H motif. C92, C98, and C104 together coordinate [2Fe-2S] cluster. The segment at 140–164 (DRQDSDKRRTPNGRPQETINVNLRA) is disordered. Residues 152–164 (GRPQETINVNLRA) are compositionally biased toward polar residues.

Requires [2Fe-2S] cluster as cofactor.

Its function is as follows. Regulates the transcription of several operons and genes involved in the biogenesis of Fe-S clusters and Fe-S-containing proteins. The chain is HTH-type transcriptional regulator IscR from Xenorhabdus nematophila (strain ATCC 19061 / DSM 3370 / CCUG 14189 / LMG 1036 / NCIMB 9965 / AN6).